An 82-amino-acid chain; its full sequence is Chaperone protein DnaJ 1 (82 aa).

The tract at residues 1–33 is disordered; the sequence is YHLGGPPVTLKLPPGTPAGRTMRARGKGAVRKD.

It belongs to the DnaJ family. Homodimer. It depends on Zn(2+) as a cofactor.

Its subcellular location is the cytoplasm. Participates actively in the response to hyperosmotic and heat shock by preventing the aggregation of stress-denatured proteins and by disaggregating proteins, also in an autonomous, DnaK-independent fashion. Unfolded proteins bind initially to DnaJ; upon interaction with the DnaJ-bound protein, DnaK hydrolyzes its bound ATP, resulting in the formation of a stable complex. GrpE releases ADP from DnaK; ATP binding to DnaK triggers the release of the substrate protein, thus completing the reaction cycle. Several rounds of ATP-dependent interactions between DnaJ, DnaK and GrpE are required for fully efficient folding. Also involved, together with DnaK and GrpE, in the DNA replication of plasmids through activation of initiation proteins. The protein is Chaperone protein DnaJ 1 (dnaJ1) of Streptomyces albus G.